The following is a 26-amino-acid chain: Coenzyme PQQ synthesis protein A (26 aa).

A cross-link (pyrroloquinoline quinone (Glu-Tyr)) is located at residues 16 to 20 (EINSY).

The protein belongs to the PqqA family.

The protein operates within cofactor biosynthesis; pyrroloquinoline quinone biosynthesis. In terms of biological role, required for coenzyme pyrroloquinoline quinone (PQQ) biosynthesis. PQQ is probably formed by cross-linking a specific glutamate to a specific tyrosine residue and excising these residues from the peptide. The polypeptide is Coenzyme PQQ synthesis protein A (Gluconacetobacter diazotrophicus (strain ATCC 49037 / DSM 5601 / CCUG 37298 / CIP 103539 / LMG 7603 / PAl5)).